Reading from the N-terminus, the 84-residue chain is MATKKAGGSSRNGRDSAGRRLGVKKYGGEVVIPGNIIVRQRGTKIFPGENVGMGKDHSIFSVVEGKVVFKKGKSDRTFVSVKPN.

Positions 1–21 (MATKKAGGSSRNGRDSAGRRL) are disordered.

This sequence belongs to the bacterial ribosomal protein bL27 family.

The protein is Large ribosomal subunit protein bL27 of Pelagibacter ubique (strain HTCC1062).